The chain runs to 445 residues: Phosphoglucosamine mutase 1 (445 aa).

Residue S102 is the Phosphoserine intermediate of the active site. Mg(2+) is bound by residues S102, D241, D243, and D245. Residue S102 is modified to Phosphoserine.

Belongs to the phosphohexose mutase family. Mg(2+) is required as a cofactor. In terms of processing, activated by phosphorylation.

It carries out the reaction alpha-D-glucosamine 1-phosphate = D-glucosamine 6-phosphate. Functionally, catalyzes the conversion of glucosamine-6-phosphate to glucosamine-1-phosphate. The polypeptide is Phosphoglucosamine mutase 1 (Shewanella baltica (strain OS185)).